An 833-amino-acid chain; its full sequence is Leucine--tRNA ligase (833 aa).

The short motif at 41-52 (PYPSGAGLHVGH) is the 'HIGH' region element. Residues 610–614 (KMSKS) carry the 'KMSKS' region motif. K613 is an ATP binding site.

The protein belongs to the class-I aminoacyl-tRNA synthetase family.

The protein localises to the cytoplasm. The enzyme catalyses tRNA(Leu) + L-leucine + ATP = L-leucyl-tRNA(Leu) + AMP + diphosphate. This is Leucine--tRNA ligase from Streptococcus equi subsp. equi (strain 4047).